The sequence spans 150 residues: Large ribosomal subunit protein uL11 (150 aa).

This sequence belongs to the universal ribosomal protein uL11 family. In terms of assembly, part of the ribosomal stalk of the 50S ribosomal subunit. Interacts with L10 and the large rRNA to form the base of the stalk. L10 forms an elongated spine to which L12 dimers bind in a sequential fashion forming a multimeric L10(L12)X complex. Post-translationally, one or more lysine residues are methylated.

Functionally, forms part of the ribosomal stalk which helps the ribosome interact with GTP-bound translation factors. In Ureaplasma urealyticum serovar 10 (strain ATCC 33699 / Western), this protein is Large ribosomal subunit protein uL11.